Reading from the N-terminus, the 763-residue chain is Amine oxidase [copper-containing] 3 (763 aa).

Over 1-6 (MNQKTT) the chain is Cytoplasmic. Residues 7–27 (LVLLALAVITIFALVCVLIAG) form a helical; Signal-anchor for type II membrane protein membrane-spanning segment. The Extracellular segment spans residues 28-763 (RGGDGGEASQ…AFSHGGFFTN (736 aa)). N-linked (GlcNAc...) asparagine glycosylation is present at N137. Residues C198 and C199 are joined by a disulfide bond. N-linked (GlcNAc...) asparagine glycans are attached at residues N232 and N294. D386 (proton acceptor) is an active-site residue. An intrachain disulfide couples C404 to C430. Y471 serves as the catalytic Schiff-base intermediate with substrate; via topaquinone. Y471 carries the 2',4',5'-topaquinone modification. The Cu(2+) site is built by H520 and H522. Ca(2+) contacts are provided by D529, L530, D531, and E572. A glycan (N-linked (GlcNAc...) asparagine) is linked at N618. Positions 641, 663, and 665 each coordinate Ca(2+). Residue N666 is glycosylated (N-linked (GlcNAc...) asparagine). Ca(2+)-binding residues include E667, D673, and L674. H684 contributes to the Cu(2+) binding site. C734 and C741 are disulfide-bonded.

This sequence belongs to the copper/topaquinone oxidase family. Homodimer; disulfide-linked. Probably forms heterodimers with AOC2. It depends on Cu(2+) as a cofactor. Ca(2+) serves as cofactor. L-topaquinone is required as a cofactor. Post-translationally, topaquinone (TPQ) is generated by copper-dependent autoxidation of a specific tyrosyl residue. N- and O-glycosylated.

It localises to the cell membrane. The catalysed reaction is methylamine + O2 + H2O = formaldehyde + H2O2 + NH4(+). The enzyme catalyses benzylamine + O2 + H2O = benzaldehyde + H2O2 + NH4(+). It carries out the reaction 2-phenylethylamine + O2 + H2O = 2-phenylacetaldehyde + H2O2 + NH4(+). In terms of biological role, catalyzes the oxidative deamination of primary amines to the corresponding aldehydes with the concomitant production of hydrogen peroxide and ammonia. Has a preference for the primary monoamines methylamine and benzylamine. Could also act on 2-phenylethylamine but much less efficiently. At endothelial cells surface can also function as a cell adhesion protein that participates in lymphocyte extravasation and recirculation by mediating the binding of lymphocytes to peripheral lymph node vascular endothelial cells in an L-selectin-independent fashion. The polypeptide is Amine oxidase [copper-containing] 3 (Bos taurus (Bovine)).